Consider the following 118-residue polypeptide: Mating-type P-specific polypeptide Pc (118 aa).

The HMG box DNA-binding region spans 29-97 (KTTIYKNGFM…VRRQIAKLER (69 aa)).

It localises to the nucleus. Mating type proteins are sequence specific DNA-binding proteins that act as master switches in yeast differentiation by controlling gene expression in a cell type-specific fashion. Required for conjugation and efficient meiosis. This is Mating-type P-specific polypeptide Pc (mat2-Pc) from Schizosaccharomyces pombe (Fission yeast).